The following is a 422-amino-acid chain: Interleukin-11 receptor subunit alpha (422 aa).

The signal sequence occupies residues 1–22 (MSSSCSGLSRVLVAVATALVSA). Over 24–370 (SPCPQAWGPP…DSVEQVAVLV (347 aa)) the chain is Extracellular. The Ig-like C2-type domain occupies 27 to 110 (PQAWGPPGVQ…LGGTVTLQLG (84 aa)). Cystine bridges form between Cys48–Cys94, Cys120–Cys130, and Cys170–Cys180. Fibronectin type-III domains lie at 112–219 (PPAR…LRPD) and 220–317 (PPQG…TPST). Residue Asn127 is glycosylated (N-linked (GlcNAc...) asparagine). The N-linked (GlcNAc...) asparagine glycan is linked to Asn194. The WSXWS motif motif lies at 304–308 (WSTWS). A disordered region spans residues 335–355 (EVEPQVDSPAPPRPSLQPHPR). A helical transmembrane segment spans residues 371-391 (SLGILSFLGLVAGALALGLWL). Residues 392–422 (RLRRGGKDGSPKPGFLASVIPVDRHPGAPNL) are Cytoplasmic-facing.

Belongs to the type I cytokine receptor family. Type 3 subfamily. On IL11 binding, forms a multimer complex with IL6ST/gp130. A short soluble form is also released from the membrane by proteolysis. The sIL11RA is formed either by limited proteolysis of membrane-bound receptors, a process referred to as ectodomain shedding, or directly secreted from the cells after alternative mRNA splicing. mIL11RA is cleaved by the proteases ADAM10, ELANE and PRTN3.

Its subcellular location is the membrane. The protein resides in the secreted. Its function is as follows. Receptor for interleukin-11 (IL11). The receptor systems for IL6, LIF, OSM, CNTF, IL11 and CT1 can utilize IL6ST for initiating signal transmission. The IL11/IL11RA/IL6ST complex may be involved in the control of proliferation and/or differentiation of skeletogenic progenitor or other mesenchymal cells. Essential for the normal development of craniofacial bones and teeth. Restricts suture fusion and tooth number. Functionally, soluble form of IL11 receptor (sIL11RA) that acts as an agonist of IL11 activity. The IL11:sIL11RA complex binds to IL6ST/gp130 on cell surfaces and induces signaling also on cells that do not express membrane-bound IL11RA in a process called IL11 trans-signaling. The polypeptide is Interleukin-11 receptor subunit alpha (IL11RA) (Pongo abelii (Sumatran orangutan)).